A 386-amino-acid chain; its full sequence is Galactokinase (386 aa).

Position 35-38 (35-38 (EHTD)) interacts with substrate. 125–131 (GAGLSSS) lines the ATP pocket. The Mg(2+) site is built by serine 131 and glutamate 163. Aspartate 175 acts as the Proton acceptor in catalysis. Position 224 (tyrosine 224) interacts with substrate.

The protein belongs to the GHMP kinase family. GalK subfamily.

Its subcellular location is the cytoplasm. It catalyses the reaction alpha-D-galactose + ATP = alpha-D-galactose 1-phosphate + ADP + H(+). The protein operates within carbohydrate metabolism; galactose metabolism. Catalyzes the transfer of the gamma-phosphate of ATP to D-galactose to form alpha-D-galactose-1-phosphate (Gal-1-P). In Vibrio cholerae serotype O1 (strain ATCC 39315 / El Tor Inaba N16961), this protein is Galactokinase.